We begin with the raw amino-acid sequence, 522 residues long: N-acetylgalactosamine-6-sulfatase (522 aa).

The signal sequence occupies residues 1-26 (MAAVVAATRWWQLLLVLSAAGMGASG). The interval 27–379 (APQPPNILLL…PTLLQGRLMD (353 aa)) is catalytic domain. Ca(2+) is bound by residues aspartate 39, aspartate 40, and cysteine 79. Residue cysteine 79 is the Nucleophile of the active site. Residue cysteine 79 is modified to 3-oxoalanine (Cys). The active site involves histidine 142. A glycan (N-linked (GlcNAc...) asparagine) is linked at asparagine 204. Residues aspartate 288 and asparagine 289 each coordinate Ca(2+). A disulfide bridge links cysteine 308 with cysteine 419. Asparagine 423 is a glycosylation site (N-linked (GlcNAc...) asparagine). 2 disulfides stabilise this stretch: cysteine 489–cysteine 518 and cysteine 501–cysteine 507.

The protein belongs to the sulfatase family. As to quaternary structure, homodimer. Ca(2+) is required as a cofactor. The conversion to 3-oxoalanine (also known as C-formylglycine, FGly), of a serine or cysteine residue in prokaryotes and of a cysteine residue in eukaryotes, is critical for catalytic activity.

The protein resides in the lysosome. The catalysed reaction is Hydrolysis of the 6-sulfate groups of the N-acetyl-D-galactosamine 6-sulfate units of chondroitin sulfate and of the D-galactose 6-sulfate units of keratan sulfate.. This Homo sapiens (Human) protein is N-acetylgalactosamine-6-sulfatase (GALNS).